The chain runs to 202 residues: Uclacyanin-2 (202 aa).

Residues 1–29 form the signal peptide; it reads MAMNGLSKMAVAAATALLLVLTIVPGAVA. The Phytocyanin domain maps to 30–126; the sequence is VTYTIEWTTG…GMKLAVNVVA (97 aa). His65 contributes to the Cu cation binding site. A glycan (N-linked (GlcNAc...) asparagine) is linked at Asn86. Cys106, His111, and Met118 together coordinate Cu cation. Residues 129 to 181 are disordered; sequence AGPPATPTPPSSTPGTPTTPESPPSGGSPTPTTPTPGAGSTSPPPPPKASGAS. A compositionally biased stretch (low complexity) spans 141–169; sequence TPGTPTTPESPPSGGSPTPTTPTPGAGST. The GPI-anchor amidated serine moiety is linked to residue Ser178. The propeptide at 179–202 is removed in mature form; that stretch reads GASKGVMSYVLVGVSMVLGYGLWM.

It is found in the cell membrane. Its function is as follows. Probably acts as an electron carrier involved in oxygen activation and/or lignin formation. The protein is Uclacyanin-2 of Arabidopsis thaliana (Mouse-ear cress).